Here is a 292-residue protein sequence, read N- to C-terminus: Polyamine aminopropyltransferase 1 (292 aa).

One can recognise a PABS domain in the interval 1 to 244; it reads MELGMFRLNI…YVNSFVFASD (244 aa). An S-methyl-5'-thioadenosine-binding site is contributed by Gln35. Positions 66 and 90 each coordinate spermidine. Residues Asp110 and 142–143 contribute to the S-methyl-5'-thioadenosine site; that span reads DG. Asp163 acts as the Proton acceptor in catalysis.

It belongs to the spermidine/spermine synthase family. Homodimer or homotetramer.

It is found in the cytoplasm. It catalyses the reaction norspermine + S-adenosyl 3-(methylsulfanyl)propylamine = caldopentamine + S-methyl-5'-thioadenosine + 2 H(+). The enzyme catalyses norspermidine + S-adenosyl 3-(methylsulfanyl)propylamine = norspermine + S-methyl-5'-thioadenosine + H(+). The catalysed reaction is S-adenosyl 3-(methylsulfanyl)propylamine + spermidine = thermospermine + S-methyl-5'-thioadenosine + H(+). Functionally, involved in the biosynthesis of polyamines which are thought to support the growth of thermophilic microorganisms under high-temperature conditions. It seems that long-chain and branched-chain of polyamines effectively stabilize DNA and RNA, respectively. Catalyzes the irreversible transfer of a propylamine group from the amino donor S-adenosylmethioninamine (decarboxy-AdoMet) to norspermidine, spermidine and norspermine to yield norspermine, thermospermine and caldopentamine, respectively. It can also synthesize sym-norspermidine (bis(3-aminopropyl)amine) from 1,3-diaminopropane with a very low activity. The biosynthesis of caldohexamine and caldoheptamine from caldopentamine has been also observed. This is Polyamine aminopropyltransferase 1 from Hyperthermus butylicus (strain DSM 5456 / JCM 9403 / PLM1-5).